The chain runs to 48 residues: MSRRMGGGMPKINLSGAIPNNNTSTPSTPTLRSSVSVSSSNSRGLFLA.

Residues 1 to 48 are disordered; the sequence is MSRRMGGGMPKINLSGAIPNNNTSTPSTPTLRSSVSVSSSNSRGLFLA. Over residues 20–48 the composition is skewed to low complexity; that stretch reads NNNTSTPSTPTLRSSVSVSSSNSRGLFLA.

This is an uncharacterized protein from Dictyostelium discoideum (Social amoeba).